Here is a 180-residue protein sequence, read N- to C-terminus: Oligoribonuclease (180 aa).

Residues 7-170 (LIWIDLEMTG…DDIRESIAEL (164 aa)) form the Exonuclease domain. Residue Tyr128 is part of the active site.

The protein belongs to the oligoribonuclease family.

It is found in the cytoplasm. In terms of biological role, 3'-to-5' exoribonuclease specific for small oligoribonucleotides. The protein is Oligoribonuclease of Pseudomonas paraeruginosa (strain DSM 24068 / PA7) (Pseudomonas aeruginosa (strain PA7)).